A 359-amino-acid chain; its full sequence is Peptide chain release factor 1 (359 aa).

N5-methylglutamine is present on Q235.

It belongs to the prokaryotic/mitochondrial release factor family. Methylated by PrmC. Methylation increases the termination efficiency of RF1.

The protein localises to the cytoplasm. Peptide chain release factor 1 directs the termination of translation in response to the peptide chain termination codons UAG and UAA. In Methylibium petroleiphilum (strain ATCC BAA-1232 / LMG 22953 / PM1), this protein is Peptide chain release factor 1.